A 94-amino-acid polypeptide reads, in one-letter code: Small ubiquitin-related modifier 3-like (94 aa).

A Glycyl lysine isopeptide (Lys-Gly) (interchain with G-Cter in SUMO) cross-link involves residue Lys-11. The Ubiquitin-like domain occupies 15–92 (DHINLKVAGQ…IDVFQQQTGG (78 aa)). Gly-92 is covalently cross-linked (Glycyl lysine isopeptide (Gly-Lys) (interchain with K-? in acceptor proteins)). Positions 93-94 (SC) are excised as a propeptide.

It belongs to the ubiquitin family. SUMO subfamily. In terms of assembly, interacts with sae2 and ube2i. Covalently attached to a number of proteins. Post-translationally, polymeric chains can be formed through Lys-11 cross-linking. Cleavage of precursor form by a sentrin-specific protease is necessary for function.

The protein resides in the cytoplasm. It localises to the nucleus. Its subcellular location is the PML body. In terms of biological role, ubiquitin-like protein which can be covalently attached to target lysines either as a monomer or as a lysine-linked polymer. Does not seem to be involved in protein degradation and may function as an antagonist of ubiquitin in the degradation process. Plays a role in a number of cellular processes such as nuclear transport, DNA replication and repair, mitosis and signal transduction. Covalent attachment to its substrates requires prior activation by the E1 complex sae1-sae2 and linkage to the E2 enzyme ube2i. The polypeptide is Small ubiquitin-related modifier 3-like (sumo3l) (Danio rerio (Zebrafish)).